The following is a 130-amino-acid chain: Small ribosomal subunit protein uS8 (130 aa).

Belongs to the universal ribosomal protein uS8 family. In terms of assembly, part of the 30S ribosomal subunit. Contacts proteins S5 and S12.

In terms of biological role, one of the primary rRNA binding proteins, it binds directly to 16S rRNA central domain where it helps coordinate assembly of the platform of the 30S subunit. The chain is Small ribosomal subunit protein uS8 from Pseudomonas fluorescens (strain Pf0-1).